The sequence spans 738 residues: Coiled-coil domain-containing protein 142 (738 aa).

Positions 1–34 (MARASSSSGPLPPLANVPSSWAQPVGAGEERDEG) are disordered. Positions 69-92 (ALQRLRATLLRLHREREQLLRARD) form a coiled coil. The tract at residues 682 to 704 (LSTLGGGGRGGGGGGGPGPSPEA) is disordered. The segment covering 685-698 (LGGGGRGGGGGGGP) has biased composition (gly residues).

This chain is Coiled-coil domain-containing protein 142 (Ccdc142), found in Mus musculus (Mouse).